The sequence spans 458 residues: Dihydrolipoyllysine-residue acetyltransferase component of pyruvate dehydrogenase complex, mitochondrial (458 aa).

A mitochondrion-targeting transit peptide spans 1–28 (MIVPVLSRQALRHASVARVALPSLTRWY). The Lipoyl-binding domain occupies 34-110 (HTVVKMPALS…AVGNPIAILV (77 aa)). Lysine 75 is modified (N6-lipoyllysine). The interval 126–164 (DAGGETSPAVPKDEPKNESTASAPTPAPTPAPEPENTSF) is disordered. The Peripheral subunit-binding (PSBD) domain maps to 177–214 (NALPAAKRLAREKGIDLRNVKGSGPGGKITEEDVKKAL). Catalysis depends on residues histidine 431 and aspartate 435.

The protein belongs to the 2-oxoacid dehydrogenase family. Requires (R)-lipoate as cofactor.

It is found in the mitochondrion matrix. It carries out the reaction N(6)-[(R)-dihydrolipoyl]-L-lysyl-[protein] + acetyl-CoA = N(6)-[(R)-S(8)-acetyldihydrolipoyl]-L-lysyl-[protein] + CoA. The pyruvate dehydrogenase complex catalyzes the overall conversion of pyruvate to acetyl-CoA and CO(2). It contains multiple copies of three enzymatic components: pyruvate dehydrogenase (E1), dihydrolipoamide acetyltransferase (E2) and lipoamide dehydrogenase (E3). The sequence is that of Dihydrolipoyllysine-residue acetyltransferase component of pyruvate dehydrogenase complex, mitochondrial (mrp-3) from Neurospora crassa (strain ATCC 24698 / 74-OR23-1A / CBS 708.71 / DSM 1257 / FGSC 987).